The primary structure comprises 164 residues: MAKSFVPLIAVLCVLVLPLAAMAVGTPFHIEGSVYCDTCRFGFETIATQYIRGARVRIVCKDRVTLKSELVGVAVTGPDGKYKVAVRGDRQDQQCLAELVHSPLSRCQEADPGRSTATVILTRSNGAASTRHYANAMGFFRDEPLRGCAALRKRYLADGDNRAI.

An N-terminal signal peptide occupies residues 1–23 (MAKSFVPLIAVLCVLVLPLAAMA). 3 disulfides stabilise this stretch: cysteine 36–cysteine 107, cysteine 39–cysteine 148, and cysteine 60–cysteine 95.

The protein belongs to the Ole e I family.

Its subcellular location is the secreted. Part of a three-gene cluster containing FLC, UFC and DFC, which is coordinately regulated in response to vernalization. Not regulated by FLX. The polypeptide is Protein DOWNSTREAM OF FLC (DFC) (Arabidopsis thaliana (Mouse-ear cress)).